We begin with the raw amino-acid sequence, 1138 residues long: Trafficking protein particle complex subunit 9 (1138 aa).

Phosphoserine is present on residues serine 557 and serine 944.

This sequence belongs to the NIBP family. In terms of assembly, component of the multisubunit TRAPP (transport protein particle) complex, which includes at least TRAPPC2, TRAPPC2L, TRAPPC3, TRAPPC3L, TRAPPC4, TRAPPC5, TRAPPC8, TRAPPC9, TRAPPC10, TRAPPC11 and TRAPPC12. Directly interacts with IKBKB and MAP3K14.

The protein localises to the golgi apparatus. Its subcellular location is the cis-Golgi network. It is found in the endoplasmic reticulum. It localises to the cytoplasm. Its function is as follows. Functions as an activator of NF-kappa-B through increased phosphorylation of the IKK complex. May function in neuronal cells differentiation. May play a role in vesicular transport from endoplasmic reticulum to Golgi. In Bos taurus (Bovine), this protein is Trafficking protein particle complex subunit 9 (TRAPPC9).